A 61-amino-acid polypeptide reads, in one-letter code: UPF0391 membrane protein Pnap_0032 (61 aa).

2 consecutive transmembrane segments (helical) span residues 5-25 and 33-53; these read AIIF…GVAA and VLFG…ALGV.

It belongs to the UPF0391 family.

It is found in the cell membrane. This Polaromonas naphthalenivorans (strain CJ2) protein is UPF0391 membrane protein Pnap_0032.